The chain runs to 797 residues: Outer membrane protein assembly factor BamA (797 aa).

The first 21 residues, 1–21, serve as a signal peptide directing secretion; that stretch reads MKLKQIASALMMLGISPLALA. 5 POTRA domains span residues 23–90, 91–171, 174–262, 265–344, and 347–421; these read FTIQ…VIER, PTIG…IDEG, AKIT…VHEG, FRWG…IEPG, and IYVN…LTER.

This sequence belongs to the BamA family. Part of the Bam complex.

The protein resides in the cell outer membrane. Its function is as follows. Part of the outer membrane protein assembly complex, which is involved in assembly and insertion of beta-barrel proteins into the outer membrane. The polypeptide is Outer membrane protein assembly factor BamA (Neisseria meningitidis serogroup B (strain ATCC BAA-335 / MC58)).